Reading from the N-terminus, the 268-residue chain is Eukaryotic translation initiation factor 3 subunit J (268 aa).

3 disordered regions span residues 1 to 27 (MSWD…DDEF), 40 to 63 (DAEE…KVDK), and 217 to 249 (LAKV…KKDQ). Residues 47 to 58 (QKQKPKAAPKAA) show a composition bias toward basic residues. Positions 191-221 (IESIRQTVATLNVLIKEKERQERQARLAKVK) form a coiled coil.

It belongs to the eIF-3 subunit J family. In terms of assembly, component of the eukaryotic translation initiation factor 3 (eIF-3) complex.

The protein resides in the cytoplasm. Functionally, component of the eukaryotic translation initiation factor 3 (eIF-3) complex, which is involved in protein synthesis of a specialized repertoire of mRNAs and, together with other initiation factors, stimulates binding of mRNA and methionyl-tRNAi to the 40S ribosome. The eIF-3 complex specifically targets and initiates translation of a subset of mRNAs involved in cell proliferation. The chain is Eukaryotic translation initiation factor 3 subunit J from Eremothecium gossypii (strain ATCC 10895 / CBS 109.51 / FGSC 9923 / NRRL Y-1056) (Yeast).